The following is a 510-amino-acid chain: NAD(P) transhydrogenase subunit alpha (510 aa).

Over 1–401 the chain is Cytoplasmic; it reads MRIGIPRERL…EEKCTCSPWR (401 aa). NAD(+)-binding positions include 120–122, Val175, 195–197, Glu238, and Leu257; these read RIS and DTR. The next 2 helical transmembrane spans lie at 402-422 and 423-443; these read KYAL…VAPK and EFLG…YVVW. Residues 444-452 lie on the Cytoplasmic side of the membrane; that stretch reads NVSHALHTP. A helical transmembrane segment spans residues 453 to 473; that stretch reads LMSVTNAISGIIVVGALLQIG. Over 474-476 the chain is Periplasmic; the sequence is QGG. Residues 477-497 form a helical membrane-spanning segment; it reads WVSFLSFIAVLIASINIFGGF. Over 498-510 the chain is Cytoplasmic; sequence TVTQRMLKMFRKN.

Belongs to the AlaDH/PNT family. As to quaternary structure, heterodimer of an alpha (PntA) and a beta (PntB) chain. Alpha subunit serves as the dimerization unit.

The protein resides in the cell inner membrane. The enzyme catalyses NAD(+) + NADPH + H(+)(in) = NADH + NADP(+) + H(+)(out). In terms of biological role, the transhydrogenation between NADH and NADP is coupled to respiration and ATP hydrolysis and functions as a proton pump across the membrane. In Escherichia coli (strain K12), this protein is NAD(P) transhydrogenase subunit alpha (pntA).